Consider the following 591-residue polypeptide: Peroxisome assembly protein 2 (591 aa).

The segment at 1-78 (MSDSDPKPTA…TNIDTNNNTN (78 aa)) is disordered. The Peroxisomal matrix portion of the chain corresponds to 1–148 (MSDSDPKPTA…TSREGTRPAF (148 aa)). A compositionally biased stretch (low complexity) spans 7-26 (KPTAAKGAAPTSIPNSTRNP). A compositionally biased stretch (pro residues) spans 27–54 (NPTPPNPNPNPNPISTPAPTPTATPSPP). Residues 55–78 (IASSSNNGNNSTRSTNIDTNNNTN) are compositionally biased toward low complexity. A helical transmembrane segment spans residues 149–175 (RVGQVDAELLDEELVELLRGQVREALR). The Cytoplasmic segment spans residues 176-196 (YVGGGGGGGGGGGGGGVGSGV). A helical membrane pass occupies residues 197–222 (AQDWEAEISLALRAVLFKLTVWDHDA). The Peroxisomal matrix portion of the chain corresponds to 223–246 (TYGAALQNLKYTDARRDGPALAPP). The helical transmembrane segment at 247–273 (SRWQKALYGLVTVGGRYLWAKWEDWLL) threads the bilayer. At 274 to 283 (EQDDGFEGPS) the chain is on the cytoplasmic side. A helical transmembrane segment spans residues 284 to 314 (PRVKRLARWTSALSTLHASAALVSFLVFLLH). Residues 315–341 (GRYRTLLDRLLRMRLAPPTSQVSREVS) lie on the Peroxisomal matrix side of the membrane. A helical membrane pass occupies residues 342 to 365 (FEYLNRQLVWHAFTEFLLFVLPLV). At 366-591 (GINRWRRWLA…EDGLDEDPES (226 aa)) the chain is on the cytoplasmic side. Zn(2+) is bound by residues Cys408, Cys411, Cys449, Cys451, Cys454, Cys457, Cys472, and Cys475. An RING-type; atypical zinc finger spans residues 408–475 (CAICYRDQNS…EGEGWPCLRC (68 aa)). Residues 512–591 (KAPSDHEEEE…EDGLDEDPES (80 aa)) form a disordered region. Composition is skewed to acidic residues over residues 517–537 (HEEE…ENEG) and 575–591 (SEDY…DPES).

This sequence belongs to the pex2/pex10/pex12 family. In terms of assembly, component of the PEX2-PEX10-PEX12 retrotranslocation channel, composed of PEX2, PEX10 and PEX12.

It localises to the peroxisome membrane. The catalysed reaction is [E2 ubiquitin-conjugating enzyme]-S-ubiquitinyl-L-cysteine + [acceptor protein]-L-cysteine = [E2 ubiquitin-conjugating enzyme]-L-cysteine + [acceptor protein]-S-ubiquitinyl-L-cysteine.. It participates in protein modification; protein ubiquitination. E3 ubiquitin-protein ligase component of a retrotranslocation channel required for peroxisome organization by mediating export of the PEX5 receptor from peroxisomes to the cytosol, thereby promoting PEX5 recycling. The retrotranslocation channel is composed of PEX2, PEX10 and PEX12; each subunit contributing transmembrane segments that coassemble into an open channel that specifically allows the passage of PEX5 through the peroxisomal membrane. PEX2 also regulates peroxisome organization by acting as a E3 ubiquitin-protein ligase. PEX2 ubiquitinates PEX5 during its passage through the retrotranslocation channel: catalyzes monoubiquitination of PEX5 at 'Cys-6', a modification that acts as a signal for PEX5 extraction into the cytosol. The chain is Peroxisome assembly protein 2 from Thermothelomyces thermophilus (strain ATCC 42464 / BCRC 31852 / DSM 1799) (Sporotrichum thermophile).